Reading from the N-terminus, the 406-residue chain is Bifunctional enzyme IspD/IspF (406 aa).

The tract at residues 1–246 (MTQMHSTQPM…KLSAGLLPDV (246 aa)) is 2-C-methyl-D-erythritol 4-phosphate cytidylyltransferase. Residues 247-406 (RTGNGYDVHQ…ATVVYRGGRP (160 aa)) form a 2-C-methyl-D-erythritol 2,4-cyclodiphosphate synthase region. Residues aspartate 253 and histidine 255 each coordinate a divalent metal cation. 4-CDP-2-C-methyl-D-erythritol 2-phosphate-binding positions include 253 to 255 (DVH) and 279 to 280 (HS). Histidine 287 contacts a divalent metal cation. 4-CDP-2-C-methyl-D-erythritol 2-phosphate contacts are provided by residues 301–303 (DIG), 377–380 (TTNE), phenylalanine 384, and arginine 387.

The protein in the N-terminal section; belongs to the IspD/TarI cytidylyltransferase family. IspD subfamily. This sequence in the C-terminal section; belongs to the IspF family. It depends on a divalent metal cation as a cofactor.

It catalyses the reaction 2-C-methyl-D-erythritol 4-phosphate + CTP + H(+) = 4-CDP-2-C-methyl-D-erythritol + diphosphate. It carries out the reaction 4-CDP-2-C-methyl-D-erythritol 2-phosphate = 2-C-methyl-D-erythritol 2,4-cyclic diphosphate + CMP. The protein operates within isoprenoid biosynthesis; isopentenyl diphosphate biosynthesis via DXP pathway; isopentenyl diphosphate from 1-deoxy-D-xylulose 5-phosphate: step 2/6. Its pathway is isoprenoid biosynthesis; isopentenyl diphosphate biosynthesis via DXP pathway; isopentenyl diphosphate from 1-deoxy-D-xylulose 5-phosphate: step 4/6. Bifunctional enzyme that catalyzes the formation of 4-diphosphocytidyl-2-C-methyl-D-erythritol from CTP and 2-C-methyl-D-erythritol 4-phosphate (MEP) (IspD), and catalyzes the conversion of 4-diphosphocytidyl-2-C-methyl-D-erythritol 2-phosphate (CDP-ME2P) to 2-C-methyl-D-erythritol 2,4-cyclodiphosphate (ME-CPP) with a corresponding release of cytidine 5-monophosphate (CMP) (IspF). The chain is Bifunctional enzyme IspD/IspF from Rhizobium rhizogenes (strain K84 / ATCC BAA-868) (Agrobacterium radiobacter).